The chain runs to 330 residues: Phenylalanine--tRNA ligase alpha subunit (330 aa).

Glu255 is a Mg(2+) binding site.

It belongs to the class-II aminoacyl-tRNA synthetase family. Phe-tRNA synthetase alpha subunit type 1 subfamily. In terms of assembly, tetramer of two alpha and two beta subunits. The cofactor is Mg(2+).

The protein localises to the cytoplasm. It carries out the reaction tRNA(Phe) + L-phenylalanine + ATP = L-phenylalanyl-tRNA(Phe) + AMP + diphosphate + H(+). The polypeptide is Phenylalanine--tRNA ligase alpha subunit (Acinetobacter baumannii (strain SDF)).